Reading from the N-terminus, the 444-residue chain is Gamma-glutamyl phosphate reductase (444 aa).

It belongs to the gamma-glutamyl phosphate reductase family.

Its subcellular location is the cytoplasm. The catalysed reaction is L-glutamate 5-semialdehyde + phosphate + NADP(+) = L-glutamyl 5-phosphate + NADPH + H(+). Its pathway is amino-acid biosynthesis; L-proline biosynthesis; L-glutamate 5-semialdehyde from L-glutamate: step 2/2. Catalyzes the NADPH-dependent reduction of L-glutamate 5-phosphate into L-glutamate 5-semialdehyde and phosphate. The product spontaneously undergoes cyclization to form 1-pyrroline-5-carboxylate. This Albidiferax ferrireducens (strain ATCC BAA-621 / DSM 15236 / T118) (Rhodoferax ferrireducens) protein is Gamma-glutamyl phosphate reductase.